The primary structure comprises 295 residues: UTP--glucose-1-phosphate uridylyltransferase (295 aa).

It belongs to the UDPGP type 2 family.

The enzyme catalyses alpha-D-glucose 1-phosphate + UTP + H(+) = UDP-alpha-D-glucose + diphosphate. Functionally, may play a role in stationary phase survival. The sequence is that of UTP--glucose-1-phosphate uridylyltransferase (galU) from Haemophilus ducreyi (strain 35000HP / ATCC 700724).